The sequence spans 398 residues: UDP-N-acetylglucosamine--N-acetylmuramyl-(pentapeptide) pyrophosphoryl-undecaprenol N-acetylglucosamine transferase (398 aa).

UDP-N-acetyl-alpha-D-glucosamine-binding positions include 11–13 (TGG), N124, R164, S192, and Q318.

This sequence belongs to the glycosyltransferase 28 family. MurG subfamily.

It localises to the cell membrane. It catalyses the reaction di-trans,octa-cis-undecaprenyl diphospho-N-acetyl-alpha-D-muramoyl-L-alanyl-D-glutamyl-meso-2,6-diaminopimeloyl-D-alanyl-D-alanine + UDP-N-acetyl-alpha-D-glucosamine = di-trans,octa-cis-undecaprenyl diphospho-[N-acetyl-alpha-D-glucosaminyl-(1-&gt;4)]-N-acetyl-alpha-D-muramoyl-L-alanyl-D-glutamyl-meso-2,6-diaminopimeloyl-D-alanyl-D-alanine + UDP + H(+). It functions in the pathway cell wall biogenesis; peptidoglycan biosynthesis. Functionally, cell wall formation. Catalyzes the transfer of a GlcNAc subunit on undecaprenyl-pyrophosphoryl-MurNAc-pentapeptide (lipid intermediate I) to form undecaprenyl-pyrophosphoryl-MurNAc-(pentapeptide)GlcNAc (lipid intermediate II). In Deinococcus radiodurans (strain ATCC 13939 / DSM 20539 / JCM 16871 / CCUG 27074 / LMG 4051 / NBRC 15346 / NCIMB 9279 / VKM B-1422 / R1), this protein is UDP-N-acetylglucosamine--N-acetylmuramyl-(pentapeptide) pyrophosphoryl-undecaprenol N-acetylglucosamine transferase.